The primary structure comprises 94 residues: Scorpine (94 aa).

An N-terminal signal peptide occupies residues 1-19 (MNSKLTALIFLGLIAIAYC). The region spanning 55 to 94 (EFQCMANMDMLGNCEKHCQTSGEKGYCHGTKCKCGTPLSY) is the BetaSPN-type CS-alpha/beta domain. Intrachain disulfides connect C58-C81, C68-C86, and C72-C88.

This sequence belongs to the long chain scorpion toxin family. Class 3 subfamily. In terms of tissue distribution, expressed by the venom gland.

It is found in the secreted. It localises to the target cell membrane. Its function is as follows. This full-length protein shows antibacterial activity against B.subtilis and K.pneumoniae. Also shows a potent inhibitory effect on the ookinete (ED(50) 0.7 uM) and gamete (ED(50) 10 uM) stages of Plasmodium berghei development. In addition, induces cell membrane disruption, leakage currents and cell death on HEK293 cell line (tested at 25 uM). The polypeptide is Scorpine (Pandinus imperator (Emperor scorpion)).